A 359-amino-acid chain; its full sequence is N-acetyl-gamma-glutamyl-phosphate reductase (359 aa).

Residue Cys-162 is part of the active site.

It belongs to the NAGSA dehydrogenase family. Type 1 subfamily.

The protein resides in the cytoplasm. It catalyses the reaction N-acetyl-L-glutamate 5-semialdehyde + phosphate + NADP(+) = N-acetyl-L-glutamyl 5-phosphate + NADPH + H(+). Its pathway is amino-acid biosynthesis; L-arginine biosynthesis; N(2)-acetyl-L-ornithine from L-glutamate: step 3/4. In terms of biological role, catalyzes the NADPH-dependent reduction of N-acetyl-5-glutamyl phosphate to yield N-acetyl-L-glutamate 5-semialdehyde. The polypeptide is N-acetyl-gamma-glutamyl-phosphate reductase (Prochlorococcus marinus (strain NATL1A)).